The sequence spans 405 residues: Phosphopentomutase (405 aa).

Residues Asp10, Asp303, His308, Asp344, His345, and His356 each contribute to the Mn(2+) site.

The protein belongs to the phosphopentomutase family. It depends on Mn(2+) as a cofactor.

The protein resides in the cytoplasm. The enzyme catalyses 2-deoxy-alpha-D-ribose 1-phosphate = 2-deoxy-D-ribose 5-phosphate. It carries out the reaction alpha-D-ribose 1-phosphate = D-ribose 5-phosphate. It participates in carbohydrate degradation; 2-deoxy-D-ribose 1-phosphate degradation; D-glyceraldehyde 3-phosphate and acetaldehyde from 2-deoxy-alpha-D-ribose 1-phosphate: step 1/2. Its function is as follows. Isomerase that catalyzes the conversion of deoxy-ribose 1-phosphate (dRib-1-P) and ribose 1-phosphate (Rib-1-P) to deoxy-ribose 5-phosphate (dRib-5-P) and ribose 5-phosphate (Rib-5-P), respectively. The sequence is that of Phosphopentomutase from Shewanella frigidimarina (strain NCIMB 400).